Consider the following 91-residue polypeptide: Small ribosomal subunit protein bS20 (91 aa).

Positions 1-18 are enriched in basic and acidic residues; the sequence is MPLHKSAEKRLRQSERRN. The interval 1-26 is disordered; the sequence is MPLHKSAEKRLRQSERRNARNRSRKK.

The protein belongs to the bacterial ribosomal protein bS20 family.

Its function is as follows. Binds directly to 16S ribosomal RNA. This is Small ribosomal subunit protein bS20 from Pelodictyon phaeoclathratiforme (strain DSM 5477 / BU-1).